The primary structure comprises 367 residues: Flagellar P-ring protein (367 aa).

Residues Met-1–Ala-22 form the signal peptide.

The protein belongs to the FlgI family. The basal body constitutes a major portion of the flagellar organelle and consists of four rings (L,P,S, and M) mounted on a central rod.

It localises to the periplasm. The protein localises to the bacterial flagellum basal body. Assembles around the rod to form the L-ring and probably protects the motor/basal body from shearing forces during rotation. In Legionella pneumophila (strain Lens), this protein is Flagellar P-ring protein.